The following is a 703-amino-acid chain: Stonustoxin subunit alpha (703 aa).

The interval 2–265 is structural MACPF/CDC pore-forming domain; it reads SSDLVMPALG…KAQQLIQEIN (264 aa). The interval 266–385 is structural FAT domain; it reads VSKVRRIHTT…GMVEGTQAKF (120 aa). The tract at residues 386-517 is thioredoxin (THX) domain; sequence VSNQTELDRE…PRMPFVQGYK (132 aa). The region spanning 508–703 is the B30.2/SPRY domain; the sequence is PRMPFVQGYK…AGNHGTLRLL (196 aa).

It belongs to the SNTX/VTX toxin family. In terms of assembly, heterodimer of alpha and beta subunits; non-covalently linked. Post-translationally, intrachain disulfide bonds may be present in the heterodimer. In terms of processing, not glycosylated. Expressed by the venom gland.

The protein localises to the secreted. This lethal (towards mammals) heterodimer induces hemolytic activities due to its ability to form pores in the cell membrane. The pore may be composed of 10 SNTX-alpha/beta heterodimers. The toxin elicits potent hypotension which is endothelium-dependent and appears to be mediated by the nitric oxide pathway and activation of potassium channels. In addition, it displays edema-inducing activities, increases vascular permeability. It also shows myotoxic activities and interferes irreversibly with neuromuscular function. It also induces irreversible platelet aggregation in rabbit or rat (but not in human or mouse) whole blood. In addition, it has been observed to increase spontaneous quantal acetylcholine release from isolated frog cutaneous pectoris motor endings. In Synanceia horrida (Estuarine stonefish), this protein is Stonustoxin subunit alpha.